The chain runs to 438 residues: Probable chaperone protein ClpB 1 (438 aa).

Positions 1–94 form a coiled coil; that stretch reads MNTADTRQRL…NNRKIEARQA (94 aa). Residues 1 to 118 are linker; the sequence is MNTADTRQRL…IADIVSRWTG (118 aa). Residues 128 to 345 form an NBD2 region; it reads ERQKLLGIES…RIDEVILFTP (218 aa). An ATP-binding site is contributed by 178–185; it reads GPTGVGKT. A C-terminal region spans residues 346-438; it reads LTRENLREIV…ENDAIVMKKK (93 aa).

This sequence belongs to the ClpA/ClpB family. As to quaternary structure, homohexamer. The oligomerization is ATP-dependent.

It is found in the cytoplasm. Functionally, part of a stress-induced multi-chaperone system, it is involved in the recovery of the cell from heat-induced damage, in cooperation with DnaK, DnaJ and GrpE. Acts before DnaK, in the processing of protein aggregates. Protein binding stimulates the ATPase activity; ATP hydrolysis unfolds the denatured protein aggregates, which probably helps expose new hydrophobic binding sites on the surface of ClpB-bound aggregates, contributing to the solubilization and refolding of denatured protein aggregates by DnaK. This Chlorobaculum tepidum (strain ATCC 49652 / DSM 12025 / NBRC 103806 / TLS) (Chlorobium tepidum) protein is Probable chaperone protein ClpB 1 (clpB1).